Consider the following 254-residue polypeptide: 3-dehydroquinate dehydratase (254 aa).

Residues glutamate 47–arginine 49 and arginine 83 contribute to the 3-dehydroquinate site. Residue histidine 144 is the Proton donor/acceptor of the active site. Lysine 171 serves as the catalytic Schiff-base intermediate with substrate. Arginine 213, serine 232, and glutamine 236 together coordinate 3-dehydroquinate.

It belongs to the type-I 3-dehydroquinase family. In terms of assembly, homodimer.

The enzyme catalyses 3-dehydroquinate = 3-dehydroshikimate + H2O. The protein operates within metabolic intermediate biosynthesis; chorismate biosynthesis; chorismate from D-erythrose 4-phosphate and phosphoenolpyruvate: step 3/7. In terms of biological role, involved in the third step of the chorismate pathway, which leads to the biosynthesis of aromatic amino acids. Catalyzes the cis-dehydration of 3-dehydroquinate (DHQ) and introduces the first double bond of the aromatic ring to yield 3-dehydroshikimate. In Neisseria gonorrhoeae (strain ATCC 700825 / FA 1090), this protein is 3-dehydroquinate dehydratase.